We begin with the raw amino-acid sequence, 557 residues long: Carboxypeptidase Y homolog A (557 aa).

Positions 1-17 are cleaved as a signal peptide; sequence MRVLPAAMLVGAATAAV. Positions 18–138 are excised as a propeptide; the sequence is PPFQQVLGGN…KLEAYDLRVK (121 aa). 5 cysteine pairs are disulfide-bonded: cysteine 193/cysteine 433, cysteine 327/cysteine 341, cysteine 351/cysteine 374, cysteine 358/cysteine 367, and cysteine 396/cysteine 403. N-linked (GlcNAc...) asparagine glycosylation is present at asparagine 224. The active site involves serine 280. Residue aspartate 472 is part of the active site. The N-linked (GlcNAc...) asparagine glycan is linked to asparagine 523. Residue histidine 534 is part of the active site.

It belongs to the peptidase S10 family.

Its subcellular location is the vacuole. It carries out the reaction Release of a C-terminal amino acid with broad specificity.. Vacuolar carboxypeptidase involved in degradation of small peptides. Digests preferentially peptides containing an aliphatic or hydrophobic residue in P1' position, as well as methionine, leucine or phenylalanine in P1 position of ester substrate. In Aspergillus niger (strain ATCC MYA-4892 / CBS 513.88 / FGSC A1513), this protein is Carboxypeptidase Y homolog A (cpyA).